A 419-amino-acid polypeptide reads, in one-letter code: 3-isopropylmalate dehydratase large subunit (419 aa).

Cys-300, Cys-360, and Cys-363 together coordinate [4Fe-4S] cluster.

It belongs to the aconitase/IPM isomerase family. LeuC type 2 subfamily. In terms of assembly, heterodimer of LeuC and LeuD. [4Fe-4S] cluster is required as a cofactor.

It carries out the reaction (2R,3S)-3-isopropylmalate = (2S)-2-isopropylmalate. It functions in the pathway amino-acid biosynthesis; L-leucine biosynthesis; L-leucine from 3-methyl-2-oxobutanoate: step 2/4. In terms of biological role, catalyzes the isomerization between 2-isopropylmalate and 3-isopropylmalate, via the formation of 2-isopropylmaleate. This is 3-isopropylmalate dehydratase large subunit from Clostridium beijerinckii (strain ATCC 51743 / NCIMB 8052) (Clostridium acetobutylicum).